A 398-amino-acid chain; its full sequence is Heat-inducible transcription repressor HrcA (398 aa).

It belongs to the HrcA family.

Functionally, negative regulator of class I heat shock genes (grpE-dnaK-dnaJ and groELS operons). Prevents heat-shock induction of these operons. The sequence is that of Heat-inducible transcription repressor HrcA from Chlamydia pneumoniae (Chlamydophila pneumoniae).